Reading from the N-terminus, the 333-residue chain is MTLAYRKIAVVGAGAWGTALAQVAASAGREVVLWAREDELVQNVNTAHENSLFLPGIALHKSIRATGDLAEAAEADALLMVTPAQHMRGVLEQLAPRIAEGKPVVLCAKGVEQSTHLLLTEVLAEAAPQAAAAVLSGPSFAAEVARGLPTAVTLACEDETVAEALTHAIGITTFRPYYSSDLIGAELGGAVKNVLAIACGIVEGKKFGDSARAALTTRGFAELTRLGLAMGARTETLMGLSGLGDLILTCNSPKSRNMSLGMALGEGKTLEEVMGARNSVSEGVHSATAVVALARKHGIEMPIAEAVARIVTGAAKVDDAVAALLSRPFRSET.

3 residues coordinate NADPH: Trp16, Arg36, and Lys109. Residues Lys109, Gly137, and Ser139 each contribute to the sn-glycerol 3-phosphate site. NADPH is bound at residue Ala141. Positions 192, 245, 255, 256, and 257 each coordinate sn-glycerol 3-phosphate. Catalysis depends on Lys192, which acts as the Proton acceptor. Residue Arg256 participates in NADPH binding. Residues Val280 and Glu282 each contribute to the NADPH site.

It belongs to the NAD-dependent glycerol-3-phosphate dehydrogenase family.

It localises to the cytoplasm. It catalyses the reaction sn-glycerol 3-phosphate + NAD(+) = dihydroxyacetone phosphate + NADH + H(+). The enzyme catalyses sn-glycerol 3-phosphate + NADP(+) = dihydroxyacetone phosphate + NADPH + H(+). Its pathway is membrane lipid metabolism; glycerophospholipid metabolism. Catalyzes the reduction of the glycolytic intermediate dihydroxyacetone phosphate (DHAP) to sn-glycerol 3-phosphate (G3P), the key precursor for phospholipid synthesis. The polypeptide is Glycerol-3-phosphate dehydrogenase [NAD(P)+] (Parvibaculum lavamentivorans (strain DS-1 / DSM 13023 / NCIMB 13966)).